Consider the following 587-residue polypeptide: Proteasome-associated ATPase (587 aa).

Residues 1–94 (MAARDDAEAR…KEEVDRLAQP (94 aa)) are a coiled coil. 276–281 (GCGKTL) contacts ATP. The tract at residues 586 to 587 (YL) is docks into pockets in the proteasome alpha-ring.

This sequence belongs to the AAA ATPase family. As to quaternary structure, homohexamer. Assembles into a hexameric ring structure that caps the 20S proteasome core. Strongly interacts with the prokaryotic ubiquitin-like protein Pup through a hydrophobic interface; the interacting region of ARC lies in its N-terminal coiled-coil domain. There is one Pup binding site per ARC hexamer ring. Upon ATP-binding, the C-terminus of ARC interacts with the alpha-rings of the proteasome core, possibly by binding to the intersubunit pockets.

It participates in protein degradation; proteasomal Pup-dependent pathway. ATPase which is responsible for recognizing, binding, unfolding and translocation of pupylated proteins into the bacterial 20S proteasome core particle. May be essential for opening the gate of the 20S proteasome via an interaction with its C-terminus, thereby allowing substrate entry and access to the site of proteolysis. Thus, the C-termini of the proteasomal ATPase may function like a 'key in a lock' to induce gate opening and therefore regulate proteolysis. This Streptosporangium roseum (strain ATCC 12428 / DSM 43021 / JCM 3005 / KCTC 9067 / NCIMB 10171 / NRRL 2505 / NI 9100) protein is Proteasome-associated ATPase.